We begin with the raw amino-acid sequence, 170 residues long: Protein SprT (170 aa).

In terms of domain architecture, SprT-like spans 22 to 165; that stretch reads LQLANQHLGT…RQCGEKLQFI (144 aa). His78 contributes to the Zn(2+) binding site. The active site involves Glu79. Zn(2+) is bound at residue His82.

This sequence belongs to the SprT family. Zn(2+) is required as a cofactor.

It is found in the cytoplasm. The chain is Protein SprT from Yersinia pseudotuberculosis serotype O:1b (strain IP 31758).